We begin with the raw amino-acid sequence, 406 residues long: N-acetylmuramoyl-L-alanine amidase CwlM (406 aa).

Peptidoglycan-binding domain stretches follow at residues 18–83 (SAAV…YRAL) and 105–160 (GDDV…LRSL). Residues 193-370 (IIIDPGRGGV…IAEGILAAVK (178 aa)) form the MurNAc-LAA domain.

This sequence belongs to the N-acetylmuramoyl-L-alanine amidase 3 family.

The protein resides in the periplasm. It catalyses the reaction Hydrolyzes the link between N-acetylmuramoyl residues and L-amino acid residues in certain cell-wall glycopeptides.. It functions in the pathway cell wall degradation; peptidoglycan degradation. Functionally, cell-wall hydrolase that hydrolyzes the amide bond between N-acetylmuramic acid and L-alanine in cell-wall glycopeptides. Is able to lyse whole mycobacteria, release peptidoglycan from the cell wall of M.luteus and M.smegmatis, and cleave N-acetylmuramoyl-L-alanyl-D-isoglutamine, releasing free N-acetylmuramic acid and dipeptide. The polypeptide is N-acetylmuramoyl-L-alanine amidase CwlM (Mycobacterium tuberculosis (strain ATCC 25618 / H37Rv)).